Reading from the N-terminus, the 90-residue chain is Small ribosomal subunit protein bS16 (90 aa).

The protein belongs to the bacterial ribosomal protein bS16 family.

The sequence is that of Small ribosomal subunit protein bS16 from Geobacillus thermodenitrificans (strain NG80-2).